Here is a 30-residue protein sequence, read N- to C-terminus: GVAFDDGSYTGIREINFEYNRETAIGGXQV.

Positions 1-30 constitute a Jacalin-type lectin domain; sequence GVAFDDGSYTGIREINFEYNRETAIGGXQV.

It belongs to the jacalin lectin family. Tetramer of four alpha chains associated with two or four beta chains.

N-acetyl-galactosamine and D-galactose specific lectin. Binds the Tn-antigen structure GalNAc-alpha-1-O-Ser, the T-antigen structure Gal-beta1-3-GalNAc and IgA. In Morus nigra (Black mulberry), this protein is Agglutinin alpha-1 chain.